Reading from the N-terminus, the 165-residue chain is Pyruvoyl-dependent arginine decarboxylase 1 (165 aa).

Ser-45 is modified (pyruvic acid (Ser)).

The protein belongs to the PdaD family. The cofactor is pyruvate.

It carries out the reaction L-arginine + H(+) = agmatine + CO2. The chain is Pyruvoyl-dependent arginine decarboxylase 1 (pdaD1) from Methanosarcina mazei (strain ATCC BAA-159 / DSM 3647 / Goe1 / Go1 / JCM 11833 / OCM 88) (Methanosarcina frisia).